The chain runs to 370 residues: Probable butyrate kinase (370 aa).

The protein belongs to the acetokinase family.

It localises to the cytoplasm. The catalysed reaction is butanoate + ATP = butanoyl phosphate + ADP. The polypeptide is Probable butyrate kinase (Elusimicrobium minutum (strain Pei191)).